A 474-amino-acid chain; its full sequence is Gamma-aminobutyric acid receptor subunit beta-1 (474 aa).

Positions 1–25 (MWTVQNRESLGLLSFPVMVAMVCCA) are cleaved as a signal peptide. Residues 26 to 245 (HSSNEPSNMS…SFRLKRNIGY (220 aa)) lie on the Extracellular side of the membrane. Asparagine 33 and asparagine 105 each carry an N-linked (GlcNAc...) asparagine glycan. Histamine is bound at residue tyrosine 122. A disulfide bridge links cysteine 161 with cysteine 175. An N-linked (GlcNAc...) asparagine glycan is attached at asparagine 174. Residues 181-182 (SY) and threonine 227 each bind histamine. 2 residues coordinate 4-aminobutanoate: tyrosine 182 and threonine 227. 3 helical membrane passes run 246-267 (FILQ…SFWI), 271-293 (ASAA…STHL), and 305-327 (AIDI…YAFV). The Cytoplasmic portion of the chain corresponds to 328-451 (NYIFFGKGPQ…DLTDVNSIDK (124 aa)). A helical membrane pass occupies residues 452 to 473 (WSRMFFPITFSLFNVVYWLYYV).

The protein belongs to the ligand-gated ion channel (TC 1.A.9) family. Gamma-aminobutyric acid receptor (TC 1.A.9.5) subfamily. GABRB1 sub-subfamily. As to quaternary structure, heteropentamer, formed by a combination of alpha (GABRA1-6), beta (GABRB1-3), gamma (GABRG1-3), delta (GABRD), epsilon (GABRE), rho (GABRR1-3), pi (GABRP) and theta (GABRQ) chains, each subunit exhibiting distinct physiological and pharmacological properties. Binds UBQLN1.

It is found in the postsynaptic cell membrane. The protein localises to the cell membrane. The enzyme catalyses chloride(in) = chloride(out). Its activity is regulated as follows. Potentiated by histamine. Beta subunit of the heteropentameric ligand-gated chloride channel gated by gamma-aminobutyric acid (GABA), a major inhibitory neurotransmitter in the brain. GABA-gated chloride channels, also named GABA(A) receptors (GABAAR), consist of five subunits arranged around a central pore and contain GABA active binding site(s) located at the alpha and beta subunit interface(s). When activated by GABA, GABAARs selectively allow the flow of chloride anions across the cell membrane down their electrochemical gradient. Chloride influx into the postsynaptic neuron following GABAAR opening decreases the neuron ability to generate a new action potential, thereby reducing nerve transmission. Beta-containing GABAARs can simultaneously bind GABA and histamine where histamine binds at the interface of two neighboring beta subunits, which may be involved in the regulation of sleep and wakefulness. In Rattus norvegicus (Rat), this protein is Gamma-aminobutyric acid receptor subunit beta-1.